A 167-amino-acid chain; its full sequence is Leukotoxin-activating lysine-acyltransferase LktC serotype A11 (167 aa).

Residues histidine 22 and aspartate 91 contribute to the active site.

This sequence belongs to the RTX toxin acyltransferase family.

It is found in the cytoplasm. The catalysed reaction is a fatty acyl-[ACP] + L-lysyl-[protein] = N(6)-(fatty acyl)-L-lysyl-[protein] + holo-[ACP] + H(+). In terms of biological role, involved in fatty acylation of the protoxin (LktA) at two internal lysine residues, thereby converting it to the active toxin. This is Leukotoxin-activating lysine-acyltransferase LktC serotype A11 (lktC) from Mannheimia haemolytica (Pasteurella haemolytica).